A 116-amino-acid chain; its full sequence is G antigen 2B/2C (116 aa).

The tract at residues 1–116 (MSWRGRSTYR…PEEGEKQSQC (116 aa)) is disordered. Acidic residues-rich tracts occupy residues 31–44 (FSDE…EEGE) and 86–95 (ECEDGPDGQE). Basic and acidic residues predominate over residues 102–116 (EEVKTPEEGEKQSQC).

Belongs to the GAGE family. As to expression, expressed in a variety of tumor tissues but not in normal tissues, except testis.

Its function is as follows. Antigen, recognized on melanoma by autologous cytolytic T-lymphocytes. This is G antigen 2B/2C (GAGE2B) from Homo sapiens (Human).